Reading from the N-terminus, the 322-residue chain is Ferredoxin--NADP reductase (322 aa).

Residues Thr12, Glu31, Gln39, Tyr44, Ala86, Phe119, and Thr317 each coordinate FAD.

The protein belongs to the ferredoxin--NADP reductase type 2 family. As to quaternary structure, homodimer. FAD serves as cofactor.

It carries out the reaction 2 reduced [2Fe-2S]-[ferredoxin] + NADP(+) + H(+) = 2 oxidized [2Fe-2S]-[ferredoxin] + NADPH. In Acholeplasma laidlawii (strain PG-8A), this protein is Ferredoxin--NADP reductase.